Reading from the N-terminus, the 124-residue chain is Ribonuclease pancreatic (124 aa).

Positions 7 and 10 each coordinate substrate. His-12 functions as the Proton acceptor in the catalytic mechanism. Disulfide bonds link Cys-26/Cys-84, Cys-40/Cys-95, Cys-58/Cys-110, and Cys-65/Cys-72. An N-linked (GlcNAc...) asparagine glycan is attached at Asn-34. Residues 41-45 (KPVNT), Lys-66, and Arg-85 each bind substrate. His-119 (proton donor) is an active-site residue.

Belongs to the pancreatic ribonuclease family. Monomer. Interacts with and forms tight 1:1 complexes with RNH1. Dimerization of two such complexes may occur. Interaction with RNH1 inhibits this protein. In terms of tissue distribution, pancreas.

The protein resides in the secreted. It carries out the reaction an [RNA] containing cytidine + H2O = an [RNA]-3'-cytidine-3'-phosphate + a 5'-hydroxy-ribonucleotide-3'-[RNA].. The catalysed reaction is an [RNA] containing uridine + H2O = an [RNA]-3'-uridine-3'-phosphate + a 5'-hydroxy-ribonucleotide-3'-[RNA].. Its function is as follows. Endonuclease that catalyzes the cleavage of RNA on the 3' side of pyrimidine nucleotides. Acts on single-stranded and double-stranded RNA. The chain is Ribonuclease pancreatic (RNASE1) from Mesocricetus auratus (Golden hamster).